The sequence spans 366 residues: Alanine racemase (366 aa).

Lysine 40 serves as the catalytic Proton acceptor; specific for D-alanine. An N6-(pyridoxal phosphate)lysine modification is found at lysine 40. Arginine 136 provides a ligand contact to substrate. Catalysis depends on tyrosine 263, which acts as the Proton acceptor; specific for L-alanine. Methionine 310 is a substrate binding site.

It belongs to the alanine racemase family. Requires pyridoxal 5'-phosphate as cofactor.

The enzyme catalyses L-alanine = D-alanine. It participates in amino-acid biosynthesis; D-alanine biosynthesis; D-alanine from L-alanine: step 1/1. In terms of biological role, catalyzes the interconversion of L-alanine and D-alanine. May also act on other amino acids. This is Alanine racemase (alr) from Streptococcus pyogenes serotype M6 (strain ATCC BAA-946 / MGAS10394).